We begin with the raw amino-acid sequence, 87 residues long: RNA-binding protein Hfq (87 aa).

The region spanning 9–68 is the Sm domain; sequence DPFLNALRRERIPVSIYLVNGIKLQGQIESFDQFVILLKNTVSQMVYKHAISTVVPARAV.

This sequence belongs to the Hfq family. In terms of assembly, homohexamer.

RNA chaperone that binds small regulatory RNA (sRNAs) and mRNAs to facilitate mRNA translational regulation in response to envelope stress, environmental stress and changes in metabolite concentrations. Also binds with high specificity to tRNAs. In Aeromonas hydrophila subsp. hydrophila (strain ATCC 7966 / DSM 30187 / BCRC 13018 / CCUG 14551 / JCM 1027 / KCTC 2358 / NCIMB 9240 / NCTC 8049), this protein is RNA-binding protein Hfq.